A 906-amino-acid polypeptide reads, in one-letter code: Rho GTPase-activating protein gacJ (906 aa).

The segment at 53–117 is disordered; that stretch reads LEGHLNPSSH…RDNSRSDNIR (65 aa). Over residues 69–79 the composition is skewed to low complexity; the sequence is NNNNNNNNNNN. The span at 92–117 shows a compositional bias: basic and acidic residues; the sequence is SRSDSKHHNRENSKSDRDNSRSDNIR. The Rho-GAP domain maps to 161-348; that stretch reads EELQSLYPDQ…YMLEYFNDIF (188 aa). Disordered regions lie at residues 368–415, 452–864, and 877–906; these read DTTS…SRSK, EIIP…SVLT, and ANQAKKNPLSNSGGLKQISPDLIKSNNINK. Residues 381–404 are compositionally biased toward polar residues; that stretch reads NGGSPRTSNTPYQQQHQLSSQSMA. The segment covering 461–487 has biased composition (low complexity); sequence TTTTTTTTTNTTTTTTTTNTTPNNTTT. 2 stretches are compositionally biased toward pro residues: residues 494–510 and 547–560; these read PVPPKPNLIPRKLPPNP and QPPPPRKPTSPSPP. Positions 565 to 574 are enriched in polar residues; the sequence is KPTSKSDFIP. Low complexity-rich tracts occupy residues 575–597 and 613–629; these read STNNNLNNNNTTTTTSSLISIPK and IEEPINPNLNINSTTTT. Positions 637-649 are enriched in polar residues; it reads FKNNGTISSGSKS. 2 stretches are compositionally biased toward low complexity: residues 650–663 and 683–694; these read NPNLQNLLNTNQPL and SKPITTTPTIKK. A compositionally biased stretch (pro residues) spans 708 to 721; that stretch reads PPSPSSSSPSPPHN. Low complexity-rich tracts occupy residues 754 to 772, 785 to 816, and 844 to 861; these read PTIPTQTTTASSSSTPTTP, PPINTSQTNNNISNSSIPSPKSKSALSLSTPK, and SSPTSSSPLQSPKISSPS. Polar residues predominate over residues 880–890; the sequence is AKKNPLSNSGG.

The protein resides in the cytoplasm. In terms of biological role, rho GTPase-activating protein involved in the signal transduction pathway. The protein is Rho GTPase-activating protein gacJ (gacJ) of Dictyostelium discoideum (Social amoeba).